The chain runs to 288 residues: MQQSTLLKPVSCYGIGVHSGKRTQLTIEPAKENTGIIFIRTDISSENNYIEASYFNVSDTLLSTTISNDHKVQISTIEHLMAALWGCSIDNAIIKIDGPEVPIMDGSSKPFVFMIECAGKKLQNAPKKYLKILKDIKVVHKDCELYCTPSDHMTVDLTIDFSSKAIGRQNLSFRDQESFTKNIADARTFGFIRDVDYLKSKGLAQGASFENAIGIDEQDKILNPNGLRYEDEFVRHKLLDLFGDLYTNGTSIVSAIKGYKTSHALNNELLHRIFSDTTSYKFVTSSEL.

Residues His-79, His-236, and Asp-240 each coordinate Zn(2+). The active-site Proton donor is the His-263.

Belongs to the LpxC family. Zn(2+) serves as cofactor.

The catalysed reaction is a UDP-3-O-[(3R)-3-hydroxyacyl]-N-acetyl-alpha-D-glucosamine + H2O = a UDP-3-O-[(3R)-3-hydroxyacyl]-alpha-D-glucosamine + acetate. The protein operates within glycolipid biosynthesis; lipid IV(A) biosynthesis; lipid IV(A) from (3R)-3-hydroxytetradecanoyl-[acyl-carrier-protein] and UDP-N-acetyl-alpha-D-glucosamine: step 2/6. Functionally, catalyzes the hydrolysis of UDP-3-O-myristoyl-N-acetylglucosamine to form UDP-3-O-myristoylglucosamine and acetate, the committed step in lipid A biosynthesis. This chain is UDP-3-O-acyl-N-acetylglucosamine deacetylase, found in Rickettsia africae (strain ESF-5).